A 185-amino-acid polypeptide reads, in one-letter code: Putative tyrosine-protein phosphatase OCA1 (185 aa).

Residues 18–178 form the Tyrosine-protein phosphatase domain; sequence NFCPVEKQLY…TVEIGSGKGS (161 aa). Catalysis depends on Cys-116, which acts as the Phosphocysteine intermediate.

Belongs to the protein-tyrosine phosphatase family.

It is found in the cytoplasm. It catalyses the reaction O-phospho-L-tyrosyl-[protein] + H2O = L-tyrosyl-[protein] + phosphate. Putative tyrosine-protein phosphatase required for protection against superoxide stress. The polypeptide is Putative tyrosine-protein phosphatase OCA1 (OCA1) (Meyerozyma guilliermondii (strain ATCC 6260 / CBS 566 / DSM 6381 / JCM 1539 / NBRC 10279 / NRRL Y-324) (Yeast)).